The primary structure comprises 906 residues: Protein translocase subunit SecA (906 aa).

ATP-binding positions include Q86, 104-108 (GEGKT), and D499. The segment at 862–886 (KPVVSRIDPKDRNPDDPTSWGRVSR) is disordered. Zn(2+) is bound by residues C890, C892, C901, and H902.

The protein belongs to the SecA family. In terms of assembly, monomer and homodimer. Part of the essential Sec protein translocation apparatus which comprises SecA, SecYEG and auxiliary proteins SecDF-YajC and YidC. Zn(2+) is required as a cofactor.

The protein resides in the cell inner membrane. Its subcellular location is the cytoplasm. It catalyses the reaction ATP + H2O + cellular proteinSide 1 = ADP + phosphate + cellular proteinSide 2.. Functionally, part of the Sec protein translocase complex. Interacts with the SecYEG preprotein conducting channel. Has a central role in coupling the hydrolysis of ATP to the transfer of proteins into and across the cell membrane, serving both as a receptor for the preprotein-SecB complex and as an ATP-driven molecular motor driving the stepwise translocation of polypeptide chains across the membrane. The sequence is that of Protein translocase subunit SecA from Rickettsia africae (strain ESF-5).